The chain runs to 361 residues: MESKQKVRKELRTERPSIYSFEIEELKSWLSENGEKPFRAAQIFEWLYEKRVTSFEKMTNLSKELRTKLNEHFVLTTLKTAVKQTSQDGTMKFLFELHDGYTIETVLMRHEYGNSVCVTTQVGCRIGCTFCASTLGGLKRNLEAGEIVAQVVKVQQALDETDERVSSIVIMGIGEPFDNFQEMLAFLKIVNHDKGLNIGARHITVSTSGIIPKIYEFADEKLQINFAISLHAPNTEIRSRLMPINRAYKLPDLMKAVDYYIKKTGRRVTFEYGLFGGVNDQVEHAEELAELLKGIKCHVNLIPVNYVPERDYVRTPKEQIFAFEKTLKSHGVNVTIRREQGHDIDAACGQLRAKERQEETR.

The Proton acceptor role is filled by Glu-104. The Radical SAM core domain maps to 110–343; sequence HEYGNSVCVT…VTIRREQGHD (234 aa). A disulfide bond links Cys-117 and Cys-348. Positions 124, 128, and 131 each coordinate [4Fe-4S] cluster. Residues 174 to 175, Ser-206, 229 to 231, and Asn-305 each bind S-adenosyl-L-methionine; these read GE and SLH. Cys-348 serves as the catalytic S-methylcysteine intermediate.

It belongs to the radical SAM superfamily. RlmN family. It depends on [4Fe-4S] cluster as a cofactor.

Its subcellular location is the cytoplasm. The catalysed reaction is adenosine(2503) in 23S rRNA + 2 reduced [2Fe-2S]-[ferredoxin] + 2 S-adenosyl-L-methionine = 2-methyladenosine(2503) in 23S rRNA + 5'-deoxyadenosine + L-methionine + 2 oxidized [2Fe-2S]-[ferredoxin] + S-adenosyl-L-homocysteine. The enzyme catalyses adenosine(37) in tRNA + 2 reduced [2Fe-2S]-[ferredoxin] + 2 S-adenosyl-L-methionine = 2-methyladenosine(37) in tRNA + 5'-deoxyadenosine + L-methionine + 2 oxidized [2Fe-2S]-[ferredoxin] + S-adenosyl-L-homocysteine. Its function is as follows. Specifically methylates position 2 of adenine 2503 in 23S rRNA and position 2 of adenine 37 in tRNAs. This Bacillus licheniformis (strain ATCC 14580 / DSM 13 / JCM 2505 / CCUG 7422 / NBRC 12200 / NCIMB 9375 / NCTC 10341 / NRRL NRS-1264 / Gibson 46) protein is Probable dual-specificity RNA methyltransferase RlmN.